The chain runs to 363 residues: MKVAIVGGGIIGLFTAYHLRQQGADVVIIEQGEPGGWSKAAAGILEFTRFVINRINVRSYPKRYLSMALRGDARIKTWDWRWISAYLRAWGREPTQDMWEAIKTLGEYSWRQYRALAEAENDFAYSEEPLYEVGIDVAAALEEAKRDPLSPKVETGRCCGREALVYLDAAKLSTEDFVARMLRELQGVQMVRRRAQEVAGREVWLEGGDVVKADAVVVAAGYWARKFGIPVAPFKGYGFRTTAKAQSMFIEMTKGVAVVPLPKWTKVTGRFDLDGTEDHSPSARVLQRAREVLGNFEVLDMSVGYRPCTPDGFPIVDKVGEVVIVTGACRLGWTYGPALGKLAADLALGKPGVEALTARRFRR.

3 to 17 (VAIVGGGIIGLFTAY) provides a ligand contact to FAD.

The protein belongs to the DadA oxidoreductase family. In terms of assembly, homotetramer. FAD serves as cofactor.

The protein resides in the cell membrane. The catalysed reaction is D-proline + A = 1-pyrroline-2-carboxylate + AH2. Its function is as follows. Catalyzes the dehydrogenation of D-proline. Can also use other D-amino acids, but with lower efficiency. In Pyrobaculum islandicum (strain DSM 4184 / JCM 9189 / GEO3), this protein is D-proline dehydrogenase (dpdh).